The following is a 226-amino-acid chain: V-type proton ATPase subunit E (226 aa).

Belongs to the V-ATPase E subunit family. V-ATPase is a heteromultimeric enzyme composed of a peripheral catalytic V1 complex (components A to H) attached to an integral membrane V0 proton pore complex (components: a, c, c', c'', d, e, f and VOA1).

The protein localises to the vacuole membrane. Its function is as follows. Subunit of the V1 complex of vacuolar(H+)-ATPase (V-ATPase), a multisubunit enzyme composed of a peripheral complex (V1) that hydrolyzes ATP and a membrane integral complex (V0) that translocates protons. V-ATPase is responsible for acidifying and maintaining the pH of intracellular compartments. This Candida albicans (Yeast) protein is V-type proton ATPase subunit E (VMA4).